The chain runs to 311 residues: Methionyl-tRNA formyltransferase (311 aa).

(6S)-5,6,7,8-tetrahydrofolate is bound at residue 110-113; it reads SLLP.

This sequence belongs to the Fmt family.

It catalyses the reaction L-methionyl-tRNA(fMet) + (6R)-10-formyltetrahydrofolate = N-formyl-L-methionyl-tRNA(fMet) + (6S)-5,6,7,8-tetrahydrofolate + H(+). In terms of biological role, attaches a formyl group to the free amino group of methionyl-tRNA(fMet). The formyl group appears to play a dual role in the initiator identity of N-formylmethionyl-tRNA by promoting its recognition by IF2 and preventing the misappropriation of this tRNA by the elongation apparatus. This is Methionyl-tRNA formyltransferase from Streptococcus equi subsp. zooepidemicus (strain H70).